A 1061-amino-acid polypeptide reads, in one-letter code: Calcium-transporting ATPase 4, endoplasmic reticulum-type (1061 aa).

Residues 1 to 21 (MGKGGEDCGNKQTNSSELVKS) form a disordered region. Over 1–70 (MGKGGEDCGN…NELEKPEGTS (70 aa)) the chain is Cytoplasmic. The chain crosses the membrane as a helical span at residues 71-91 (IFKLILEQFNDTLVRILLAAA). At 92-115 (VISFVLAFFDGDEGGEMGITAFVE) the chain is on the lumenal side. A helical transmembrane segment spans residues 116 to 135 (PLVIFLILIVNAIVGIWQET). The Cytoplasmic segment spans residues 136–278 (NAEKALEALK…EEDTPLKKKL (143 aa)). Residues 279–298 (NEFGEVLTMIIGLICALVWL) form a helical membrane-spanning segment. Residues 299 to 327 (INVKYFLSWEYVDGWPRNFKFSFEKCTYY) lie on the Lumenal side of the membrane. The chain crosses the membrane as a helical span at residues 328–345 (FEIAVALAVAAIPEGLPA). Val-336, Ala-337, Ile-339, and Glu-341 together coordinate Ca(2+). Over 346–786 (VITTCLALGT…GEGRSIYNNM (441 aa)) the chain is Cytoplasmic. Catalysis depends on Asp-383, which acts as the 4-aspartylphosphate intermediate. Mg(2+) contacts are provided by Asp-731 and Asp-735. The helical transmembrane segment at 787–806 (KAFIRYMISSNIGEVASIFL) threads the bilayer. Positions 797 and 800 each coordinate Ca(2+). The Lumenal portion of the chain corresponds to 807–816 (TAALGIPEGM). The chain crosses the membrane as a helical span at residues 817 to 837 (IPVQLLWVNLVTDGPPATALG). Asn-825, Thr-828, and Asp-829 together coordinate Ca(2+). The Cytoplasmic segment spans residues 838–857 (FNPPDKDIMKKPPRRSDDSL). A helical membrane pass occupies residues 858–880 (ITAWILFRYMVIGLYVGVATVGV). Residues 881–950 (FIIWYTHNSF…YFQQGKIKAS (70 aa)) lie on the Lumenal side of the membrane. Residues 951 to 970 (TLSLSVLVAIEMFNSLNALS) form a helical membrane-spanning segment. A Ca(2+)-binding site is contributed by Glu-961. The Cytoplasmic segment spans residues 971 to 983 (EDGSLVTMPPWVN). A helical membrane pass occupies residues 984–1002 (PWLLLAMAVSFGLHFVILY). The Lumenal portion of the chain corresponds to 1003-1017 (VPFLAQVFGIVPLSL). Residues 1018 to 1038 (NEWLLVLAVSLPVILIDEVLK) form a helical membrane-spanning segment. At 1039–1061 (FVGRCTSGYRYSPRTPSAKQKEE) the chain is on the cytoplasmic side.

Belongs to the cation transport ATPase (P-type) (TC 3.A.3) family. Type IIA subfamily.

It is found in the membrane. It carries out the reaction Ca(2+)(in) + ATP + H2O = Ca(2+)(out) + ADP + phosphate + H(+). Functionally, this magnesium-dependent enzyme catalyzes the hydrolysis of ATP coupled with the translocation of calcium from the cytosol to an endomembrane compartment. The polypeptide is Calcium-transporting ATPase 4, endoplasmic reticulum-type (ECA4) (Arabidopsis thaliana (Mouse-ear cress)).